A 276-amino-acid polypeptide reads, in one-letter code: Thiazole synthase (276 aa).

Lys-112 acts as the Schiff-base intermediate with DXP in catalysis. Residues Gly-173, 199 to 200, and 221 to 222 contribute to the 1-deoxy-D-xylulose 5-phosphate site; these read AG and NT.

This sequence belongs to the ThiG family. In terms of assembly, homotetramer. Forms heterodimers with either ThiH or ThiS.

It is found in the cytoplasm. The catalysed reaction is [ThiS sulfur-carrier protein]-C-terminal-Gly-aminoethanethioate + 2-iminoacetate + 1-deoxy-D-xylulose 5-phosphate = [ThiS sulfur-carrier protein]-C-terminal Gly-Gly + 2-[(2R,5Z)-2-carboxy-4-methylthiazol-5(2H)-ylidene]ethyl phosphate + 2 H2O + H(+). It participates in cofactor biosynthesis; thiamine diphosphate biosynthesis. Catalyzes the rearrangement of 1-deoxy-D-xylulose 5-phosphate (DXP) to produce the thiazole phosphate moiety of thiamine. Sulfur is provided by the thiocarboxylate moiety of the carrier protein ThiS. In vitro, sulfur can be provided by H(2)S. The sequence is that of Thiazole synthase from Synechococcus sp. (strain ATCC 27144 / PCC 6301 / SAUG 1402/1) (Anacystis nidulans).